The primary structure comprises 238 residues: MDSVSNLKIAVLINTPPDETDFQSVVRECFREAFASIAPTGEVDFYDPVVERKFPDASRYDLVVLSGGKIDAACSDPWVLGVLDYVRITARDLPKTKILAVCWGHQAVSRAFGGQVRPVPAGEITAIEDIRLTDAGMKFFPFAATSGSYRAIELHSGEVYTPPPGFISLAENQECFINDTNNVLTFQAHPEISHELASKLILEEDKKHSRNSSAEVLGIDRPTEGLKLLERVLQWLSE.

The 231-residue stretch at 8–238 folds into the Glutamine amidotransferase type-1 domain; it reads KIAVLINTPP…LERVLQWLSE (231 aa). The active-site Nucleophile is Cys-102. Catalysis depends on residues His-189 and Glu-191.

This sequence belongs to the peptidase C26 family.

The protein operates within pigment biosynthesis. Glutamine amidotransferase-like protein; part of the gene cluster that mediates the biosynthesis of the yellow pigment chrysogine. the NRPS chyA mediates the condensation of anthranilic acid and alanine into the intermediate 2-(2-aminopropanamido)benzoic acid. The remainder of the pathway is highly branched yielding at least 13 chrysogine-related compounds. The malonyl transferase chyE converts 2-(2-aminopropanamido)benzoic acid and 2-(2-aminopropanamido)benzamidine into 2-(2-(2-carboxyacetamido)propanamido)benzoic acid and 3-((1-((2-carbamoylphenyl)amino)-1-oxopropan-2-yl)amino)-3-oxopropanoic acid, respectively. ChyD is an amidase, being responsible for the amidation of the carboxylic acid moiety of 2-(2-aminopropanamido)benzoic acid, 2-(2-(2-carboxyacetamido)propanamido)benzoic acid and 2-(2-((4-amino-1-carboxy-4-oxobutyl)amino)propanamido)benzoic acid. ChyC is involved in the same reactions as ChyD, but plays a more minor role in the amidation reactions compared to chyD. The oxidoreductases chyH and chyM are involved in oxidation reactions that form N-pyruvoylanthranilamide from 2-(2-aminopropanamido)benzamidine and (1-((2-carbamoylphenyl)amino)-1-oxopropan-2-yl)glutamine, respectively. N-pyruvoylanthranilamide is further converted via two further branches in the pathway, yielding chrysogine and additional chrysogine-related coumpounds. Chrysogine is likely formed by a spontaneous ring closure from N-pyruvoylanthranilamide. In Penicillium rubens (strain ATCC 28089 / DSM 1075 / NRRL 1951 / Wisconsin 54-1255) (Penicillium chrysogenum), this protein is Glutamine amidotransferase-like protein chyE.